Here is a 156-residue protein sequence, read N- to C-terminus: Probable cyclic pyranopterin monophosphate synthase (156 aa).

Substrate is bound at residue 109 to 110 (MD). Residue Asp-124 is part of the active site.

The protein belongs to the MoaC family. Homohexamer; trimer of dimers.

It carries out the reaction (8S)-3',8-cyclo-7,8-dihydroguanosine 5'-triphosphate = cyclic pyranopterin phosphate + diphosphate. Its pathway is cofactor biosynthesis; molybdopterin biosynthesis. Functionally, catalyzes the conversion of (8S)-3',8-cyclo-7,8-dihydroguanosine 5'-triphosphate to cyclic pyranopterin monophosphate (cPMP). In Methanopyrus kandleri (strain AV19 / DSM 6324 / JCM 9639 / NBRC 100938), this protein is Probable cyclic pyranopterin monophosphate synthase.